A 439-amino-acid chain; its full sequence is FBD-associated F-box protein At5g56380 (439 aa).

The region spanning 1–61 (MDRISHLADE…LPETWGYQEP (61 aa)) is the F-box domain. In terms of domain architecture, FBD spans 358–406 (WNQPGSVPRCLSSSLETLEWVEYGGTHEEKELSTYLFKTAVCFKKASFT).

The protein is FBD-associated F-box protein At5g56380 of Arabidopsis thaliana (Mouse-ear cress).